The following is a 257-amino-acid chain: Sulfur carrier protein FdhD (257 aa).

The active-site Cysteine persulfide intermediate is the Cys105.

Belongs to the FdhD family.

It localises to the cytoplasm. Required for formate dehydrogenase (FDH) activity. Acts as a sulfur carrier protein that transfers sulfur from IscS to the molybdenum cofactor prior to its insertion into FDH. The chain is Sulfur carrier protein FdhD from Saccharolobus solfataricus (strain ATCC 35092 / DSM 1617 / JCM 11322 / P2) (Sulfolobus solfataricus).